The chain runs to 265 residues: MRIVLTNDDGIEAPGLLAARRALEEVGEVITVAPDRNRSGVGRSITFGAELYVEERRMADGGVGYACSGTPVDCVRLVALGMVEGFRPDIVVSGINHGENLGDDITYSGTVAGALEAIVIGVPGIAVSLSTGRPWHGADGREELHFEPVARFTARLAGLALRDLPPGRILNVNAPNLPEEELEGARVTRLGRRFYQDELIEVRDKNGRVGYNIYNNPPGHHDEEGTDFAALQSRRISVTPVHLDLTDTAGLKELESWDIGRLVVR.

Positions 8, 9, 39, and 96 each coordinate a divalent metal cation.

The protein belongs to the SurE nucleotidase family. A divalent metal cation serves as cofactor.

Its subcellular location is the cytoplasm. It carries out the reaction a ribonucleoside 5'-phosphate + H2O = a ribonucleoside + phosphate. In terms of biological role, nucleotidase that shows phosphatase activity on nucleoside 5'-monophosphates. This Rubrobacter xylanophilus (strain DSM 9941 / JCM 11954 / NBRC 16129 / PRD-1) protein is 5'-nucleotidase SurE.